Consider the following 141-residue polypeptide: Hemoglobin subunit alpha (141 aa).

A Globin domain is found at 1-141 (VLSEADKSNV…VSTVLTSKYR (141 aa)). Histidine 58 serves as a coordination point for O2. Histidine 87 is a binding site for heme b.

The protein belongs to the globin family. In terms of assembly, heterotetramer of two alpha chains and two beta chains. When oxygenated in vitro, exists virtually only in polymeric form. When deoxygenated, forms tetramers, octamers and larger polymers. In terms of tissue distribution, red blood cells.

Its function is as follows. Involved in oxygen transport from the lung to the various peripheral tissues. This is Hemoglobin subunit alpha from Paleosuchus palpebrosus (Cuvier's smooth-fronted caiman).